We begin with the raw amino-acid sequence, 288 residues long: tRNA-cytidine(32) 2-sulfurtransferase (288 aa).

A PP-loop motif motif is present at residues 70-75 (SGGKDS). Cys145, Cys148, and Cys236 together coordinate [4Fe-4S] cluster.

It belongs to the TtcA family. In terms of assembly, homodimer. It depends on Mg(2+) as a cofactor. The cofactor is [4Fe-4S] cluster.

It localises to the cytoplasm. It carries out the reaction cytidine(32) in tRNA + S-sulfanyl-L-cysteinyl-[cysteine desulfurase] + AH2 + ATP = 2-thiocytidine(32) in tRNA + L-cysteinyl-[cysteine desulfurase] + A + AMP + diphosphate + H(+). Its pathway is tRNA modification. In terms of biological role, catalyzes the ATP-dependent 2-thiolation of cytidine in position 32 of tRNA, to form 2-thiocytidine (s(2)C32). The sulfur atoms are provided by the cysteine/cysteine desulfurase (IscS) system. The sequence is that of tRNA-cytidine(32) 2-sulfurtransferase from Bartonella tribocorum (strain CIP 105476 / IBS 506).